The chain runs to 415 residues: Elongation factor Tu, chloroplastic (415 aa).

In terms of domain architecture, tr-type G spans 13 to 217 (KIHLNVGTIG…HLDLYLPTPR (205 aa)). The G1 stretch occupies residues 22–29 (GHFSHGKT). Residue 22-29 (GHFSHGKT) coordinates GTP. Thr29 contacts Mg(2+). The interval 63–67 (NMSIY) is G2. The interval 84-87 (DCPG) is G3. GTP-binding positions include 84-88 (DCPGH) and 139-142 (NKED). The tract at residues 139 to 142 (NKED) is G4. The tract at residues 177 to 179 (SAL) is G5.

Belongs to the TRAFAC class translation factor GTPase superfamily. Classic translation factor GTPase family. EF-Tu/EF-1A subfamily.

It localises to the plastid. The protein resides in the chloroplast. It carries out the reaction GTP + H2O = GDP + phosphate + H(+). In terms of biological role, GTP hydrolase that promotes the GTP-dependent binding of aminoacyl-tRNA to the A-site of ribosomes during protein biosynthesis. The chain is Elongation factor Tu, chloroplastic (tufA) from Coleochaete orbicularis (Charophycean green alga).